The chain runs to 381 residues: Succinyl-diaminopimelate desuccinylase (381 aa).

His71 provides a ligand contact to Zn(2+). Asp73 is a catalytic residue. Asp104 contributes to the Zn(2+) binding site. Glu138 functions as the Proton acceptor in the catalytic mechanism. Zn(2+) contacts are provided by Glu139, Glu167, and His353.

Belongs to the peptidase M20A family. DapE subfamily. Homodimer. Requires Zn(2+) as cofactor. Co(2+) serves as cofactor.

It carries out the reaction N-succinyl-(2S,6S)-2,6-diaminopimelate + H2O = (2S,6S)-2,6-diaminopimelate + succinate. It functions in the pathway amino-acid biosynthesis; L-lysine biosynthesis via DAP pathway; LL-2,6-diaminopimelate from (S)-tetrahydrodipicolinate (succinylase route): step 3/3. In terms of biological role, catalyzes the hydrolysis of N-succinyl-L,L-diaminopimelic acid (SDAP), forming succinate and LL-2,6-diaminopimelate (DAP), an intermediate involved in the bacterial biosynthesis of lysine and meso-diaminopimelic acid, an essential component of bacterial cell walls. The protein is Succinyl-diaminopimelate desuccinylase of Shewanella pealeana (strain ATCC 700345 / ANG-SQ1).